The chain runs to 339 residues: D-erythrose-4-phosphate dehydrogenase (339 aa).

12–13 contributes to the NAD(+) binding site; the sequence is RI. Substrate is bound by residues 154–156, Arg200, 213–214, and Arg236; these read SCT and TK. Cys155 serves as the catalytic Nucleophile. Residue Asn318 participates in NAD(+) binding.

Belongs to the glyceraldehyde-3-phosphate dehydrogenase family. Epd subfamily. In terms of assembly, homotetramer.

It localises to the cytoplasm. The enzyme catalyses D-erythrose 4-phosphate + NAD(+) + H2O = 4-phospho-D-erythronate + NADH + 2 H(+). It functions in the pathway cofactor biosynthesis; pyridoxine 5'-phosphate biosynthesis; pyridoxine 5'-phosphate from D-erythrose 4-phosphate: step 1/5. In terms of biological role, catalyzes the NAD-dependent conversion of D-erythrose 4-phosphate to 4-phosphoerythronate. The sequence is that of D-erythrose-4-phosphate dehydrogenase from Enterobacter sp. (strain 638).